Reading from the N-terminus, the 1119-residue chain is GATOR2 complex protein MIOS (1119 aa).

The stretch at 3 to 43 (QSSTRKRLIQWSPHNKSSFIVGSNDLRLYNFKFKDKNEKKN) is one WD 1 repeat. Positions 41-60 (KKNENNINNSNQYNQNNQQQ) are disordered. Over residues 45–60 (NNINNSNQYNQNNQQQ) the composition is skewed to low complexity. WD repeat units lie at residues 127-169 (KTIS…ILTS), 183-227 (KHTR…STTL), 281-321 (TQSE…SSQS), 324-364 (AHQK…DPLI), and 368-409 (SNCK…EFSK). The disordered stretch occupies residues 413–455 (LESTTLSTGGGGSGSNTSNNLNKRSTSNNNNSQDPINTISKPT). The segment covering 427-444 (SNTSNNLNKRSTSNNNNS) has biased composition (low complexity). Residues 459–499 (HSSDVVSSFSWHPTNECRMLTVSYSGVIDVVSLNENIPISW) form a WD 7 repeat. The tract at residues 601 to 669 (PSISTTTPGG…NNNNNNNNNN (69 aa)) is disordered. The C4-type zinc finger occupies 973–1016 (AKCGFCQNSFAFESISASSIVGRNASSKPNFKAKVPFCPHCKQS). 13 residues coordinate Zn(2+): C975, C978, C1010, C1013, C1023, C1085, C1088, H1090, H1093, H1096, C1107, C1112, and C1116.

Belongs to the WD repeat mio family. Probably part of the GATOR complex.

It is found in the lysosome membrane. Functionally, as a component of the GATOR complex may function in the amino acid-sensing branch of the TORC1 signaling pathway. The chain is GATOR2 complex protein MIOS from Dictyostelium discoideum (Social amoeba).